The following is a 27-amino-acid chain: Superoxide dismutase [Mn] (27 aa).

This sequence belongs to the iron/manganese superoxide dismutase family. Homodimer. Mn(2+) serves as cofactor.

It carries out the reaction 2 superoxide + 2 H(+) = H2O2 + O2. Its function is as follows. Destroys superoxide anion radicals which are normally produced within the cells and which are toxic to biological systems. The protein is Superoxide dismutase [Mn] (sodA) of Desulfovibrio desulfuricans.